Here is a 20-residue protein sequence, read N- to C-terminus: Short cationic peptide-4b (20 aa).

Glutamate 20 carries the post-translational modification Glutamic acid 1-amide.

As to expression, expressed by the venom gland.

The protein resides in the secreted. This is Short cationic peptide-4b from Cupiennius salei (American wandering spider).